A 260-amino-acid polypeptide reads, in one-letter code: Adenosylcobinamide-GDP ribazoletransferase (260 aa).

The next 7 helical transmembrane spans lie at 42–62 (PLAGGILGLLAGVALLIANAI), 64–84 (LPPLAAALIAIGALAAMTGAL), 117–137 (FAALTLVIWTGVKASLLMAII), 144–164 (YALLALIGTEAASRAGMLAFW), 192–212 (GLGLALLAIGFLPSGGMVALI), 214–234 (ALVLMTVVLFGFARLCMAKIG), and 240–260 (TLGAAQQIGSLAALIGLVMAL).

It belongs to the CobS family. It depends on Mg(2+) as a cofactor.

It localises to the cell inner membrane. It carries out the reaction alpha-ribazole + adenosylcob(III)inamide-GDP = adenosylcob(III)alamin + GMP + H(+). It catalyses the reaction alpha-ribazole 5'-phosphate + adenosylcob(III)inamide-GDP = adenosylcob(III)alamin 5'-phosphate + GMP + H(+). It functions in the pathway cofactor biosynthesis; adenosylcobalamin biosynthesis; adenosylcobalamin from cob(II)yrinate a,c-diamide: step 7/7. In terms of biological role, joins adenosylcobinamide-GDP and alpha-ribazole to generate adenosylcobalamin (Ado-cobalamin). Also synthesizes adenosylcobalamin 5'-phosphate from adenosylcobinamide-GDP and alpha-ribazole 5'-phosphate. This is Adenosylcobinamide-GDP ribazoletransferase from Brucella abortus (strain S19).